A 372-amino-acid polypeptide reads, in one-letter code: Protein phosphatase Mn(2+)-dependent 1K (372 aa).

The N-terminal 29 residues, 1–29 (MLSTAFITLVRSGRNQVKKRVLLSSILLQ), are a transit peptide targeting the mitochondrion. Residues 46–61 (RCSRFDPDGSGQPATW) form a critical for association with the BCKDH complex region. The region spanning 94–346 (NVGCASLIGK…DNSTAVVVPF (253 aa)) is the PPM-type phosphatase domain. Residues Asp127 and Gly128 each contribute to the Mn(2+) site. Ser248 carries the post-translational modification Phosphoserine. The Mn(2+) site is built by Asp298 and Asp337.

It belongs to the PP2C family. Interacts with E1 and E2 components of the branched-chain alpha-ketoacid dehydrogenase (BCKDH) complex. Interacts with both BCKDHA and BCKDHB chains of the E1 subunit. Interacts with the 24-meric DBT/E2 core of the BCKD complex with a 1:1 stoichiometry; the N-terminal region (residues 49-61) of PPM1K and C-terminal linker of the lipoyl domain of DBT/E2 (residues 145-160) are critical for this interaction whereas the lipoyl prosthetic group is dispensable. Competes with BCKDK for binding to DBT/E2; this interaction is modulated by branched-chain alpha-keto acids (BCKAs). At steady state, BCKDH holoenzyme preferentially binds BCKDK and BCKDHA/E1 is phosphorylated. In response to high levels of BCKAs, BCKDK is replaced by PPM1K leading to BCKDHA/E1 dephosphorylation. Mn(2+) serves as cofactor.

Its subcellular location is the mitochondrion matrix. It carries out the reaction O-phospho-L-seryl-[3-methyl-2-oxobutanoate dehydrogenase] + H2O = L-seryl-[3-methyl-2-oxobutanoate dehydrogenase] + phosphate. The enzyme catalyses O-phospho-L-seryl-[protein] + H2O = L-seryl-[protein] + phosphate. It participates in protein modification. Functionally, serine/threonine-protein phosphatase component of macronutrients metabolism. Together with BCKDK serves as a metabolic regulatory node that coordinates branched-chain amino acids (BCAAs) and protein synthesis with glucose and lipid metabolism via two distinct phosphoprotein targets: BCKDHA/E1a subunit of the branched-chain alpha-ketoacid dehydrogenase (BCKDH) complex and ACLY, a lipogenic enzyme of Krebs cycle. At high levels of branched-chain ketoacids (BCKAs), dephosphorylates and activates mitochondrial BCKDH complex, a multisubunit complex consisting of three components, heterotetrameric E1 composed of BCKDHA and BCKDHB chains, 24-meric E2 core composed of DBT and homodimeric E3 composed of DLD, each involved in different steps of BCAA catabolism. Tightly associates with the E2 subunit of BCKDH complex and dephosphorylates Ser-333 of BCKDHA chain of the E1 subunit likely through on-off binding to individual E2 subunits of the 24-meric E2 core to increase the efficiency of the dephosphorylation reaction. Appears to dephosphorylate and inactivate cytosolic ACLY in response to changes of cellular carbohydrate abundance. Overnutrition and in particular high-fructose diet, activates MLXIPL/ChREBP leading to increased BCKDK to PPM1K ratio, phosphorylation of ACLY on Ser-454 and activation of its enzymatic activity that ultimately results in the generation of acetyl-CoA and malonyl-CoA immediate substrates of de novo lipogenesis. Recognizes phosphosites having SxS or RxxS motifs and strictly depends on Mn(2+) ions for the phosphatase activity. Regulates Ca(2+)-induced opening of mitochondrial transition pore and apoptotic cell death. The chain is Protein phosphatase Mn(2+)-dependent 1K (Ppm1k) from Rattus norvegicus (Rat).